A 233-amino-acid polypeptide reads, in one-letter code: Phosphatidylserine decarboxylase proenzyme (233 aa).

S188 acts as the Schiff-base intermediate with substrate; via pyruvic acid in catalysis. S188 carries the post-translational modification Pyruvic acid (Ser); by autocatalysis.

Belongs to the phosphatidylserine decarboxylase family. PSD-A subfamily. Heterodimer of a large membrane-associated beta subunit and a small pyruvoyl-containing alpha subunit. Pyruvate is required as a cofactor. Is synthesized initially as an inactive proenzyme. Formation of the active enzyme involves a self-maturation process in which the active site pyruvoyl group is generated from an internal serine residue via an autocatalytic post-translational modification. Two non-identical subunits are generated from the proenzyme in this reaction, and the pyruvate is formed at the N-terminus of the alpha chain, which is derived from the carboxyl end of the proenzyme. The post-translation cleavage follows an unusual pathway, termed non-hydrolytic serinolysis, in which the side chain hydroxyl group of the serine supplies its oxygen atom to form the C-terminus of the beta chain, while the remainder of the serine residue undergoes an oxidative deamination to produce ammonia and the pyruvoyl prosthetic group on the alpha chain.

It localises to the cell membrane. The catalysed reaction is a 1,2-diacyl-sn-glycero-3-phospho-L-serine + H(+) = a 1,2-diacyl-sn-glycero-3-phosphoethanolamine + CO2. Its pathway is phospholipid metabolism; phosphatidylethanolamine biosynthesis; phosphatidylethanolamine from CDP-diacylglycerol: step 2/2. Its function is as follows. Catalyzes the formation of phosphatidylethanolamine (PtdEtn) from phosphatidylserine (PtdSer). This Ruegeria sp. (strain TM1040) (Silicibacter sp.) protein is Phosphatidylserine decarboxylase proenzyme.